The primary structure comprises 203 residues: Glycerol-3-phosphate acyltransferase (203 aa).

Helical transmembrane passes span 10-30 (MLILWAVIGYGLGSIPFGLIL), 59-79 (GAAALTLLLDGGKGAVAVLLA), 87-107 (AAQVAALAAFVGHCYPIWLGF), 116-136 (FLGLWLALAWPVGVACCLSWL), and 160-180 (LVLLDQGAGFVLGIVLTLMVF).

This sequence belongs to the PlsY family. As to quaternary structure, probably interacts with PlsX.

The protein resides in the cell inner membrane. It carries out the reaction an acyl phosphate + sn-glycerol 3-phosphate = a 1-acyl-sn-glycero-3-phosphate + phosphate. It participates in lipid metabolism; phospholipid metabolism. Catalyzes the transfer of an acyl group from acyl-phosphate (acyl-PO(4)) to glycerol-3-phosphate (G3P) to form lysophosphatidic acid (LPA). This enzyme utilizes acyl-phosphate as fatty acyl donor, but not acyl-CoA or acyl-ACP. In Ruegeria pomeroyi (strain ATCC 700808 / DSM 15171 / DSS-3) (Silicibacter pomeroyi), this protein is Glycerol-3-phosphate acyltransferase.